The sequence spans 171 residues: Shikimate kinase (171 aa).

14 to 19 (GAGKST) contributes to the ATP binding site. Ser18 is a binding site for Mg(2+). 3 residues coordinate substrate: Asp36, Arg60, and Gly82. Arg120 contacts ATP. Arg139 provides a ligand contact to substrate. Residue Gln156 coordinates ATP.

The protein belongs to the shikimate kinase family. As to quaternary structure, monomer. Mg(2+) serves as cofactor.

Its subcellular location is the cytoplasm. The enzyme catalyses shikimate + ATP = 3-phosphoshikimate + ADP + H(+). Its pathway is metabolic intermediate biosynthesis; chorismate biosynthesis; chorismate from D-erythrose 4-phosphate and phosphoenolpyruvate: step 5/7. Catalyzes the specific phosphorylation of the 3-hydroxyl group of shikimic acid using ATP as a cosubstrate. This Shewanella amazonensis (strain ATCC BAA-1098 / SB2B) protein is Shikimate kinase.